A 271-amino-acid chain; its full sequence is Short-chain dehydrogenase ptmH (271 aa).

Positions 8, 34, 40, 56, 84, 148, 152, 181, and 183 each coordinate NADP(+). The active-site Proton acceptor is the Tyr-148. Lys-152 (lowers pKa of active site Tyr) is an active-site residue.

Belongs to the short-chain dehydrogenases/reductases (SDR) family.

It participates in secondary metabolite biosynthesis. Its function is as follows. Short-chain dehydrogenase; part of the gene cluster that mediates the biosynthesis of the indole diterpenes penitrems. The geranylgeranyl diphosphate (GGPP) synthase ptmG catalyzes the first step in penitrem biosynthesis via conversion of farnesyl pyrophosphate and isopentyl pyrophosphate into geranylgeranyl pyrophosphate (GGPP). Condensation of indole-3-glycerol phosphate with GGPP by the prenyl transferase ptmC then forms 3-geranylgeranylindole (3-GGI). Epoxidation by the FAD-dependent monooxygenase ptmM leads to a epoxidized-GGI that is substrate of the terpene cyclase ptmB for cyclization to yield paspaline. Paspaline is subsequently converted to 13-desoxypaxilline by the cytochrome P450 monooxygenase ptmP, the latter being then converted to paxilline by the cytochrome P450 monooxygenase ptmQ. Paxilline is converted to beta-paxitriol via C-10 ketoreduction by the short-chain dehydrogenase ptmH which can be monoprenylated at the C-20 by the indole diterpene prenyltransferase ptmD. A two-step elimination (acetylation and elimination) process performed by the O-acetyltransferase ptmV and ptmI leads to the production of the prenylated form of penijanthine. The FAD-linked oxidoreductase ptmO then converts the prenylated form of penijanthine into PC-M5 which is in turn transformed into PC-M4 by the aromatic dimethylallyltransferase ptmE. Five sequential oxidative transformations performed by the cytochrome P450 monooxygenases ptmK, ptmU, ptmL, ptmN and ptmJ yield the various penitrem compounds. PtmK, ptmU and ptmM are involved in the formation of the key bicyclic ring of penitrem C via the formation of the intermediates secopenitrem D and penitrem D. PtmL catalyzes the epoxidation of penitrem D and C to yield penitrem B and F, respectively. PtmJ catalyzes the last benzylic hydroxylation to convert penitrem B to prenitrem E and penitrem F to penitrem A. The sequence is that of Short-chain dehydrogenase ptmH from Penicillium ochrochloron.